Consider the following 150-residue polypeptide: CASP-like protein 2 (150 aa).

The Cytoplasmic portion of the chain corresponds to 1–17 (MKPEAGDGRSGWRWVAT). Residues 18–38 (FDLILRLAAIVATSTAVLAAM) traverse the membrane as a helical segment. The Extracellular portion of the chain corresponds to 39-41 (GKT). The helical transmembrane segment at 42-62 (FVVVVNGVACFYLLMSLPVSI) threads the bilayer. Topologically, residues 63-82 (FNIMRPGACPANRAVLTALD) are cytoplasmic. The helical transmembrane segment at 83 to 103 (MVTVALVTAGALVAGILYLVH) threads the bilayer. Residues 104–121 (KAGDTHADWFSIWSQLDS) lie on the Extracellular side of the membrane. A helical membrane pass occupies residues 122 to 142 (LSYLAVLALILHVLLSGSILY). Residues 143 to 150 (KQALNIMF) are Cytoplasmic-facing.

The protein belongs to the Casparian strip membrane proteins (CASP) family. As to quaternary structure, homodimer and heterodimers.

It is found in the cell membrane. The protein is CASP-like protein 2 of Picea sitchensis (Sitka spruce).